Consider the following 895-residue polypeptide: uncharacterized protein (895 aa).

2–19 provides a ligand contact to NAD(+); that stretch reads NISVIGTGYVGLIQAVGL. The active site involves C261. The 147-residue stretch at 468–614 folds into the DOD-type homing endonuclease domain; that stretch reads LIGYYLSEGW…LLILLQLLGI (147 aa).

This sequence belongs to the UDP-glucose/GDP-mannose dehydrogenase family. Post-translationally, this protein undergoes a protein self splicing that involves a post-translational excision of the intervening region (intein) followed by peptide ligation.

This is an uncharacterized protein from Methanocaldococcus jannaschii (strain ATCC 43067 / DSM 2661 / JAL-1 / JCM 10045 / NBRC 100440) (Methanococcus jannaschii).